Here is a 264-residue protein sequence, read N- to C-terminus: Acyl-[acyl-carrier-protein]--UDP-N-acetylglucosamine O-acyltransferase (264 aa).

The protein belongs to the transferase hexapeptide repeat family. LpxA subfamily. As to quaternary structure, homotrimer.

The protein localises to the cytoplasm. It catalyses the reaction a (3R)-hydroxyacyl-[ACP] + UDP-N-acetyl-alpha-D-glucosamine = a UDP-3-O-[(3R)-3-hydroxyacyl]-N-acetyl-alpha-D-glucosamine + holo-[ACP]. The protein operates within glycolipid biosynthesis; lipid IV(A) biosynthesis; lipid IV(A) from (3R)-3-hydroxytetradecanoyl-[acyl-carrier-protein] and UDP-N-acetyl-alpha-D-glucosamine: step 1/6. Involved in the biosynthesis of lipid A, a phosphorylated glycolipid that anchors the lipopolysaccharide to the outer membrane of the cell. This chain is Acyl-[acyl-carrier-protein]--UDP-N-acetylglucosamine O-acyltransferase, found in Albidiferax ferrireducens (strain ATCC BAA-621 / DSM 15236 / T118) (Rhodoferax ferrireducens).